The sequence spans 463 residues: L-2-hydroxyglutarate dehydrogenase, mitochondrial (463 aa).

The N-terminal 52 residues, 1–52 (MVPALRYLGSVCGRARGIFPGGFSAAHTPASGKSRLLCQGGRRASTSSFDIV), are a transit peptide targeting the mitochondrion. 2 positions are modified to N6-acetyllysine: K104 and K173.

Belongs to the L2HGDH family. Requires FAD as cofactor.

It localises to the mitochondrion. The enzyme catalyses (S)-2-hydroxyglutarate + A = 2-oxoglutarate + AH2. In Bos taurus (Bovine), this protein is L-2-hydroxyglutarate dehydrogenase, mitochondrial (L2HGDH).